Consider the following 127-residue polypeptide: uncharacterized protein (127 aa).

At threonine 30 the chain carries Phosphothreonine. A disordered region spans residues 51 to 75 (APTYEQVLYPPASQKKTSNSTSEES). Serine 63 carries the phosphoserine modification.

This is an uncharacterized protein from Mus musculus (Mouse).